The primary structure comprises 381 residues: Sterol 24-C-methyltransferase ERG6A (381 aa).

This sequence belongs to the class I-like SAM-binding methyltransferase superfamily. Erg6/SMT family.

The catalysed reaction is lanosterol + S-adenosyl-L-methionine = eburicol + S-adenosyl-L-homocysteine + H(+). It participates in steroid metabolism; ergosterol biosynthesis. In terms of biological role, sterol 24-C-methyltransferase; part of the third module of ergosterol biosynthesis pathway that includes the late steps of the pathway. ERG6A and ERG6B methylate lanosterol at C-24 to produce eburicol. The third module or late pathway involves the ergosterol synthesis itself through consecutive reactions that mainly occur in the endoplasmic reticulum (ER) membrane. Firstly, the squalene synthase ERG9 catalyzes the condensation of 2 farnesyl pyrophosphate moieties to form squalene, which is the precursor of all steroids. Squalene synthase is crucial for balancing the incorporation of farnesyl diphosphate (FPP) into sterol and nonsterol isoprene synthesis. Secondly, squalene is converted into lanosterol by the consecutive action of the squalene epoxidase ERG1 and the lanosterol synthase ERG7. Then, the delta(24)-sterol C-methyltransferase ERG6 methylates lanosterol at C-24 to produce eburicol. Eburicol is the substrate of the sterol 14-alpha demethylase encoded by CYP51A, CYP51B and CYP51C, to yield 4,4,24-trimethyl ergosta-8,14,24(28)-trienol. CYP51B encodes the enzyme primarily responsible for sterol 14-alpha-demethylation, and plays an essential role in ascospore formation. CYP51A encodes an additional sterol 14-alpha-demethylase, induced on ergosterol depletion and responsible for the intrinsic variation in azole sensitivity. The third CYP51 isoform, CYP51C, does not encode a sterol 14-alpha-demethylase, but is required for full virulence on host wheat ears. The C-14 reductase ERG24 then reduces the C14=C15 double bond which leads to 4,4-dimethylfecosterol. A sequence of further demethylations at C-4, involving the C-4 demethylation complex containing the C-4 methylsterol oxidases ERG25, the sterol-4-alpha-carboxylate 3-dehydrogenase ERG26 and the 3-keto-steroid reductase ERG27, leads to the production of fecosterol via 4-methylfecosterol. ERG28 has a role as a scaffold to help anchor ERG25, ERG26 and ERG27 to the endoplasmic reticulum. The C-8 sterol isomerase ERG2 then catalyzes the reaction which results in unsaturation at C-7 in the B ring of sterols and thus converts fecosterol to episterol. The sterol-C5-desaturases ERG3A and ERG3BB then catalyze the introduction of a C-5 double bond in the B ring to produce 5-dehydroepisterol. The C-22 sterol desaturases ERG5A and ERG5B further convert 5-dehydroepisterol into ergosta-5,7,22,24(28)-tetraen-3beta-ol by forming the C-22(23) double bond in the sterol side chain. Finally, ergosta-5,7,22,24(28)-tetraen-3beta-ol is substrate of the C-24(28) sterol reductase ERG4 to produce ergosterol. In Gibberella zeae (strain ATCC MYA-4620 / CBS 123657 / FGSC 9075 / NRRL 31084 / PH-1) (Wheat head blight fungus), this protein is Sterol 24-C-methyltransferase ERG6A (FG02783.1).